A 72-amino-acid polypeptide reads, in one-letter code: Translation initiation factor IF-1 (72 aa).

The 72-residue stretch at 1–72 folds into the S1-like domain; that stretch reads MSKDDVIEVE…TRGRIIYRHK (72 aa).

Belongs to the IF-1 family. Component of the 30S ribosomal translation pre-initiation complex which assembles on the 30S ribosome in the order IF-2 and IF-3, IF-1 and N-formylmethionyl-tRNA(fMet); mRNA recruitment can occur at any time during PIC assembly.

The protein resides in the cytoplasm. One of the essential components for the initiation of protein synthesis. Stabilizes the binding of IF-2 and IF-3 on the 30S subunit to which N-formylmethionyl-tRNA(fMet) subsequently binds. Helps modulate mRNA selection, yielding the 30S pre-initiation complex (PIC). Upon addition of the 50S ribosomal subunit IF-1, IF-2 and IF-3 are released leaving the mature 70S translation initiation complex. This is Translation initiation factor IF-1 from Carboxydothermus hydrogenoformans (strain ATCC BAA-161 / DSM 6008 / Z-2901).